The primary structure comprises 121 residues: Probable V-type proton ATPase subunit F (121 aa).

Belongs to the V-ATPase F subunit family. In terms of assembly, V-ATPase is a heteromultimeric enzyme made up of two complexes: the ATP-hydrolytic V1 complex and the proton translocation V0 complex. The V1 complex consists of three catalytic AB heterodimers that form a heterohexamer, three peripheral stalks each consisting of EG heterodimers, one central rotor including subunits D and F, and the regulatory subunits C and H. The proton translocation complex V0 consists of the proton transport subunit a, a ring of proteolipid subunits c9c'', rotary subunit d, subunits e and f, and the accessory subunits vah-19/Ac45 and vah-20/PRR.

In terms of biological role, subunit of the V1 complex of vacuolar(H+)-ATPase (V-ATPase), a multisubunit enzyme composed of a peripheral complex (V1) that hydrolyzes ATP and a membrane integral complex (V0) that translocates protons. V-ATPase is responsible for acidifying and maintaining the pH of intracellular compartments and in some cell types, is targeted to the plasma membrane, where it is responsible for acidifying the extracellular environment. Required along with other vacuolar ATPase components for the removal of protein aggregates which form in immature oocytes in the distal gonad. This removal occurs as the oocytes mature and move to the proximal gonad, is triggered by the introduction of sperm through mating and occurs before fertilization. The introduction of sperm triggers V-ATPase accumulation in proximal oocytes and induces lysosomal acidification which leads to engulfing of protein aggregates by lysosomes and subsequent clearance of the aggregates. Lysosomal acidification also leads to changes in mitochondrial morphology and function. Mitochondria in distal immature oocytes are fragmented, produce high levels of reactive oxygen species (ROS) and have high membrane potential, indicative of metabolic inactivity. In contrast, mitochondria in proximal mature oocytes are tubular with lower ROS levels and membrane potential, indicative of an active metabolic state required for aggregate mobilization before clearance. This chain is Probable V-type proton ATPase subunit F, found in Caenorhabditis elegans.